Here is a 1493-residue protein sequence, read N- to C-terminus: Mitogen-activated protein kinase kinase kinase 1 (1493 aa).

2 stretches are compositionally biased toward low complexity: residues 1 to 23 (MAAA…ASPE) and 33 to 42 (GSGAPAAGAG). Disordered stretches follow at residues 1-171 (MAAA…DRPE) and 222-295 (LQGE…EETS). At alanine 2 the chain carries N-acetylalanine. The residue at position 21 (serine 21) is a Phosphoserine. The span at 84–94 (PPCPSTSPSPE) shows a compositional bias: pro residues. 2 stretches are compositionally biased toward low complexity: residues 95 to 108 (PADA…FQPA) and 135 to 151 (ARSP…APSG). The residue at position 137 (serine 137) is a Phosphoserine. The span at 152 to 171 (REMENKETLKGLHKMDDRPE) shows a compositional bias: basic and acidic residues. Residues 230–257 (SAAPAPKGRRSPSPGSSPSGRSGKPESP) show a composition bias toward low complexity. Position 265 is a phosphoserine (serine 265). Threonine 275 is subject to Phosphothreonine. Phosphoserine occurs at positions 282, 287, and 290. The SWIM-type zinc finger occupies 328–356 (YRVFIGPQNCSCGRGTFCIHLLFVMLRVF). The RING-type zinc-finger motif lies at 433–482 (CPICLLGMLDEESLTVCEDGCRNKLHHHCMSIWAEECRRNREPLICPLCR). Polar residues predominate over residues 496-506 (SSPVDSPTSLR). Disordered stretches follow at residues 496–524 (SSPV…SQRR), 866–910 (DTLD…LSAS), 923–955 (VGLP…SPLS), and 992–1060 (PCKI…ASKN). Phosphoserine is present on residues serine 497, serine 521, and serine 910. Positions 507–522 (GVQQPSSPQQPVAGSQ) are enriched in low complexity. Polar residues-rich tracts occupy residues 925–940 (LPSS…TVQT) and 998–1014 (ASPQ…QRTC). Phosphoserine is present on residues serine 999 and serine 1024. The span at 1049–1060 (GSTSKLGDASKN) shows a compositional bias: polar residues. Positions 1224-1489 (WLKGQQIGLG…SRELLKHPVF (266 aa)) constitute a Protein kinase domain. Residues 1230-1238 (IGLGAFSSC) and lysine 1253 each bind ATP. Aspartate 1350 serves as the catalytic Proton acceptor. Threonine 1381 and threonine 1393 each carry phosphothreonine; by autocatalysis.

It belongs to the protein kinase superfamily. STE Ser/Thr protein kinase family. MAP kinase kinase kinase subfamily. As to quaternary structure, binds both upstream activators and downstream substrates in multimolecular complexes through its N-terminus. Oligomerizes after binding MAP4K2 or TRAF2. Interacts (via the kinase catalytic domain) with STK38. Interacts with GRIPAP1. Requires Mg(2+) as cofactor. Autophosphorylated. As to expression, most highly expressed in spleen, kidney and lung.

It localises to the membrane. The catalysed reaction is L-seryl-[protein] + ATP = O-phospho-L-seryl-[protein] + ADP + H(+). It carries out the reaction L-threonyl-[protein] + ATP = O-phospho-L-threonyl-[protein] + ADP + H(+). Activated by autophosphorylation on Thr-1381 and Thr-1393 following oligomerization. Functionally, component of a protein kinase signal transduction cascade. Activates the ERK and JNK kinase pathways by phosphorylation of MAP2K1 and MAP2K4. May phosphorylate the MAPK8/JNK1 kinase. Activates CHUK and IKBKB, the central protein kinases of the NF-kappa-B pathway. In Rattus norvegicus (Rat), this protein is Mitogen-activated protein kinase kinase kinase 1 (Map3k1).